A 122-amino-acid chain; its full sequence is Large ribosomal subunit protein uL14 (122 aa).

The protein belongs to the universal ribosomal protein uL14 family. As to quaternary structure, part of the 50S ribosomal subunit. Forms a cluster with proteins L3 and L19. In the 70S ribosome, L14 and L19 interact and together make contacts with the 16S rRNA in bridges B5 and B8.

In terms of biological role, binds to 23S rRNA. Forms part of two intersubunit bridges in the 70S ribosome. In Borreliella burgdorferi (strain ATCC 35210 / DSM 4680 / CIP 102532 / B31) (Borrelia burgdorferi), this protein is Large ribosomal subunit protein uL14.